The primary structure comprises 60 residues: Putative SERF-like protein (60 aa).

The segment covering 1 to 53 (MTRGNQRDLARQKNQKKQADLTKGKRTDNLTVEQRKARDAELMREKQKKKEEA) has biased composition (basic and acidic residues). Residues 1–60 (MTRGNQRDLARQKNQKKQADLTKGKRTDNLTVEQRKARDAELMREKQKKKEEAAAAGTSK) form a disordered region.

It belongs to the SERF family.

This chain is Putative SERF-like protein, found in Drosophila melanogaster (Fruit fly).